Here is a 666-residue protein sequence, read N- to C-terminus: Probable potassium transport system protein Kup (666 aa).

A run of 12 helical transmembrane segments spans residues 16–36 (GFII…LYTM), 58–78 (ISLI…LIAL), 100–120 (PWLI…GALT), 141–161 (IYQN…VLFG), 165–185 (FGTG…FSFL), 221–241 (IFIL…YSDL), 253–273 (WPFV…WILA), 294–314 (VYLV…LISG), 343–363 (LYIP…VLYF), 373–393 (YGLA…YYLI), 399–419 (PFLA…FFWA), and 424–444 (FMHG…VMFI).

The protein belongs to the HAK/KUP transporter (TC 2.A.72) family.

The protein localises to the cell membrane. The enzyme catalyses K(+)(in) + H(+)(in) = K(+)(out) + H(+)(out). Its function is as follows. Transport of potassium into the cell. Likely operates as a K(+):H(+) symporter. The sequence is that of Probable potassium transport system protein Kup from Streptococcus pyogenes serotype M6 (strain ATCC BAA-946 / MGAS10394).